A 398-amino-acid chain; its full sequence is Acetate kinase (398 aa).

Residue Asn7 coordinates Mg(2+). Residue Lys14 coordinates ATP. Arg90 serves as a coordination point for substrate. Asp147 functions as the Proton donor/acceptor in the catalytic mechanism. ATP is bound by residues 207 to 211 (HLGNG), 282 to 284 (DMR), and 330 to 334 (GIGEN). Glu383 is a Mg(2+) binding site.

Belongs to the acetokinase family. Homodimer. It depends on Mg(2+) as a cofactor. Requires Mn(2+) as cofactor.

It is found in the cytoplasm. The catalysed reaction is acetate + ATP = acetyl phosphate + ADP. It functions in the pathway metabolic intermediate biosynthesis; acetyl-CoA biosynthesis; acetyl-CoA from acetate: step 1/2. Functionally, catalyzes the formation of acetyl phosphate from acetate and ATP. Can also catalyze the reverse reaction. In Symbiobacterium thermophilum (strain DSM 24528 / JCM 14929 / IAM 14863 / T), this protein is Acetate kinase.